The primary structure comprises 1104 residues: Carbamoyl phosphate synthase large chain (1104 aa).

Residues 1 to 403 (MPRRQDIQKI…SFQKALRSLE (403 aa)) form a carboxyphosphate synthetic domain region. The ATP site is built by Arg129, Arg170, Gly176, Gly177, Gln209, Leu211, Glu216, Gly242, Ile243, His244, Gln286, and Glu300. One can recognise an ATP-grasp 1 domain in the interval 133 to 329 (NEAMDKIGVK…IAKMAAKLAV (197 aa)). Residues Gln286, Glu300, and Asn302 each coordinate Mg(2+). Mn(2+) is bound by residues Gln286, Glu300, and Asn302. Positions 404–552 (TGRAGWGCDK…YSTYEEETEV (149 aa)) are oligomerization domain. Residues 553–966 (IPASKPKVMI…AFAKAELGAG (414 aa)) are carbamoyl phosphate synthetic domain. An ATP-grasp 2 domain is found at 703 to 900 (EKILQKLNIS…LAKLASLIMS (198 aa)). ATP-binding residues include Arg739, Lys778, Leu780, Glu785, Gly811, Ile812, His813, Ser814, Gln854, and Glu871. Residues Gln854, Glu871, and Asn873 each contribute to the Mg(2+) site. The Mn(2+) site is built by Gln854, Glu871, and Asn873. The region spanning 967–1104 (ERLPLTGTVF…KTIQEYCPNF (138 aa)) is the MGS-like domain. Residues 967 to 1104 (ERLPLTGTVF…KTIQEYCPNF (138 aa)) form an allosteric domain region.

Belongs to the CarB family. Composed of two chains; the small (or glutamine) chain promotes the hydrolysis of glutamine to ammonia, which is used by the large (or ammonia) chain to synthesize carbamoyl phosphate. Tetramer of heterodimers (alpha,beta)4. The cofactor is Mg(2+). Mn(2+) is required as a cofactor.

The catalysed reaction is hydrogencarbonate + L-glutamine + 2 ATP + H2O = carbamoyl phosphate + L-glutamate + 2 ADP + phosphate + 2 H(+). It catalyses the reaction hydrogencarbonate + NH4(+) + 2 ATP = carbamoyl phosphate + 2 ADP + phosphate + 2 H(+). The protein operates within amino-acid biosynthesis; L-arginine biosynthesis; carbamoyl phosphate from bicarbonate: step 1/1. It participates in pyrimidine metabolism; UMP biosynthesis via de novo pathway; (S)-dihydroorotate from bicarbonate: step 1/3. In terms of biological role, large subunit of the glutamine-dependent carbamoyl phosphate synthetase (CPSase). CPSase catalyzes the formation of carbamoyl phosphate from the ammonia moiety of glutamine, carbonate, and phosphate donated by ATP, constituting the first step of 2 biosynthetic pathways, one leading to arginine and/or urea and the other to pyrimidine nucleotides. The large subunit (synthetase) binds the substrates ammonia (free or transferred from glutamine from the small subunit), hydrogencarbonate and ATP and carries out an ATP-coupled ligase reaction, activating hydrogencarbonate by forming carboxy phosphate which reacts with ammonia to form carbamoyl phosphate. The chain is Carbamoyl phosphate synthase large chain from Nostoc sp. (strain PCC 7120 / SAG 25.82 / UTEX 2576).